The following is a 387-amino-acid chain: Anhydro-N-acetylmuramic acid kinase (387 aa).

17–24 (GTSMDGVD) is a binding site for ATP.

The protein belongs to the anhydro-N-acetylmuramic acid kinase family.

It catalyses the reaction 1,6-anhydro-N-acetyl-beta-muramate + ATP + H2O = N-acetyl-D-muramate 6-phosphate + ADP + H(+). Its pathway is amino-sugar metabolism; 1,6-anhydro-N-acetylmuramate degradation. It functions in the pathway cell wall biogenesis; peptidoglycan recycling. Its function is as follows. Catalyzes the specific phosphorylation of 1,6-anhydro-N-acetylmuramic acid (anhMurNAc) with the simultaneous cleavage of the 1,6-anhydro ring, generating MurNAc-6-P. Is required for the utilization of anhMurNAc either imported from the medium or derived from its own cell wall murein, and thus plays a role in cell wall recycling. In Burkholderia pseudomallei (strain K96243), this protein is Anhydro-N-acetylmuramic acid kinase.